A 49-amino-acid chain; its full sequence is Sporulation protein YjcZ (49 aa).

A helical membrane pass occupies residues 29 to 49 (STFVLLVVLFILLIIVGASFF).

Belongs to the SscA family.

The protein localises to the membrane. This is Sporulation protein YjcZ (yjcZ) from Bacillus subtilis (strain 168).